The following is a 574-amino-acid chain: MARHLITSALPYINGIKHLGNMVGSMLPADVYSRYLRQRGHDVLYICATDEHGTPAELAAKERGLPVDEFCAQAHDAQKAVYDGFELAFDYFGRSSSEQNREITQHFARRLNENGFIEERAIRQVYSPADGRFLPDRYVEGTCPHCGYDKARGDQCENCTRVLDPTDLINPRSAISGSTDLEVRETKHLFLLQSKLQHEVEEWVARHEEEWPQLASSIARKWLNEGLHDRAITRDLDWGVPVPADTWPELAAEGKVFYVWFDAPIEYIGATKEWSDLDPENRDWKSWWYDADSGENPVRYTEFMAKDNVPFHTVMFPATELGVREPWKKVDYVKAFNWLTYYGGKFSTSQKRGVFTDHALEILPADYWRYFLIANAPESDDSSFTWEHFTATVNKDLADTLGNFVNRVLSFSKKRFGEEVPAGAPAGESETKLGEEIAALLAEYESHMETLQFRKAAAALRALWSAGNSYLEEKAPWLEIKTNPEGAALTLRTAMNLIHLYSVVSEPFIPASSKAMRSAFALSEDTATWVTQDEAKSLDSVPAGTPFTVPPVLFAKITDEDLESYKERFGGAPE.

A 'HIGH' region motif is present at residues P11–N21. Zn(2+)-binding residues include C143, C146, C156, and C159. A 'KMSKS' region motif is present at residues K345 to S349. T348 is a binding site for ATP.

It belongs to the class-I aminoacyl-tRNA synthetase family. MetG type 1 subfamily. In terms of assembly, monomer. The cofactor is Zn(2+).

It localises to the cytoplasm. It catalyses the reaction tRNA(Met) + L-methionine + ATP = L-methionyl-tRNA(Met) + AMP + diphosphate. Its function is as follows. Is required not only for elongation of protein synthesis but also for the initiation of all mRNA translation through initiator tRNA(fMet) aminoacylation. This is Methionine--tRNA ligase from Streptomyces avermitilis (strain ATCC 31267 / DSM 46492 / JCM 5070 / NBRC 14893 / NCIMB 12804 / NRRL 8165 / MA-4680).